Here is a 189-residue protein sequence, read N- to C-terminus: MTEYKLVVVGAGGVGKSALTIQLIQNHFVDEYDPTIEDSYRKQVVIDGETCLLDILDTAGQEEYSAMRDQYMRTGEGFLLVFAVNSAKSFEDIGTYREQIKRVKDAEEVPMVLVGNKCDLASWNVQNEQAREVAKQYGIPYIETSAKTRMGVDDAFYTLVREIRKDKDNKGRKGRKTNKPNRRFKCKML.

10–17 (GAGGVGKS) lines the GTP pocket. Residues 32–40 (YDPTIEDSY) carry the Effector region motif. Residues 57–61 (DTAGQ) and 116–119 (NKCD) contribute to the GTP site. Residue cysteine 186 is modified to Cysteine methyl ester. Residue cysteine 186 is the site of S-geranylgeranyl cysteine attachment. The propeptide at 187–189 (KML) is removed in mature form.

Belongs to the small GTPase superfamily. Ras family.

The protein localises to the cell membrane. The enzyme catalyses GTP + H2O = GDP + phosphate + H(+). Alternates between an inactive form bound to GDP and an active form bound to GTP. Activated by a guanine nucleotide-exchange factor (GEF) and inactivated by a GTPase-activating protein (GAP). Its function is as follows. Ras proteins bind GDP/GTP and possess intrinsic GTPase activity. Plays a role in eye development by regulating cell growth, survival of postmitotic ommatidial cells and differentiation of photoreceptor cells. During larval development, mediates Ptth/tor signaling leading to the production of ecdysone, a hormone required for the initiation of metamorphosis. This is Ras-like protein 1 from Drosophila virilis (Fruit fly).